We begin with the raw amino-acid sequence, 81 residues long: MSHSVKIYDTCIGCTQCVRACPLDVLEMVPWDGCKAGQIASSPRTEDCVGCKRCETACPTDFLSIRVYLGAETTRSMGLAY.

4Fe-4S ferredoxin-type domains follow at residues 2-31 (SHSVKIYDTCIGCTQCVRACPLDVLEMVPW) and 37-68 (GQIASSPRTEDCVGCKRCETACPTDFLSIRVY). [4Fe-4S] cluster contacts are provided by cysteine 11, cysteine 14, cysteine 17, cysteine 21, cysteine 48, cysteine 51, cysteine 54, and cysteine 58.

In terms of assembly, the cyanobacterial PSI reaction center is composed of one copy each of PsaA,B,C,D,E,F,I,J,K,L,M and X, and forms trimeric complexes. Requires [4Fe-4S] cluster as cofactor.

Its subcellular location is the cellular thylakoid membrane. It carries out the reaction reduced [plastocyanin] + hnu + oxidized [2Fe-2S]-[ferredoxin] = oxidized [plastocyanin] + reduced [2Fe-2S]-[ferredoxin]. In terms of biological role, apoprotein for the two 4Fe-4S centers FA and FB of photosystem I (PSI); essential for photochemical activity. FB is the terminal electron acceptor of PSI, donating electrons to ferredoxin. The C-terminus interacts with PsaA/B/D and helps assemble the protein into the PSI complex. Required for binding of PsaD and PsaE to PSI. PSI is a plastocyanin/cytochrome c6-ferredoxin oxidoreductase, converting photonic excitation into a charge separation, which transfers an electron from the donor P700 chlorophyll pair to the spectroscopically characterized acceptors A0, A1, FX, FA and FB in turn. Mutant proteins with a 3Fe-4S center are not observed bound to PSI in vitro, and are probably not able to do so in vivo. The chain is Photosystem I iron-sulfur center (psaC) from Picosynechococcus sp. (strain ATCC 27264 / PCC 7002 / PR-6) (Agmenellum quadruplicatum).